We begin with the raw amino-acid sequence, 97 residues long: Putative membrane protein insertion efficiency factor (97 aa).

The protein belongs to the UPF0161 family.

The protein localises to the cell membrane. In terms of biological role, could be involved in insertion of integral membrane proteins into the membrane. The chain is Putative membrane protein insertion efficiency factor from Lactobacillus gasseri (strain ATCC 33323 / DSM 20243 / BCRC 14619 / CIP 102991 / JCM 1131 / KCTC 3163 / NCIMB 11718 / NCTC 13722 / AM63).